Here is a 508-residue protein sequence, read N- to C-terminus: Bifunctional purine biosynthesis protein PurH (508 aa).

In terms of domain architecture, MGS-like spans 1 to 145; sequence MIKRALLSTY…KNYKDVIVVV (145 aa).

Belongs to the PurH family.

It carries out the reaction (6R)-10-formyltetrahydrofolate + 5-amino-1-(5-phospho-beta-D-ribosyl)imidazole-4-carboxamide = 5-formamido-1-(5-phospho-D-ribosyl)imidazole-4-carboxamide + (6S)-5,6,7,8-tetrahydrofolate. The catalysed reaction is IMP + H2O = 5-formamido-1-(5-phospho-D-ribosyl)imidazole-4-carboxamide. The protein operates within purine metabolism; IMP biosynthesis via de novo pathway; 5-formamido-1-(5-phospho-D-ribosyl)imidazole-4-carboxamide from 5-amino-1-(5-phospho-D-ribosyl)imidazole-4-carboxamide (10-formyl THF route): step 1/1. Its pathway is purine metabolism; IMP biosynthesis via de novo pathway; IMP from 5-formamido-1-(5-phospho-D-ribosyl)imidazole-4-carboxamide: step 1/1. This chain is Bifunctional purine biosynthesis protein PurH, found in Petrotoga mobilis (strain DSM 10674 / SJ95).